Reading from the N-terminus, the 911-residue chain is Alpha-actinin-4 (911 aa).

The interval 1 to 269 (MVDYHAANQS…YVSSFYHAFS (269 aa)) is actin-binding. The segment at 12 to 26 (QYGPSSAGNGAGGGG) is interaction with VCL. Phosphotyrosine is present on Y31. An interaction with VCL region spans residues 40-61 (RDLLLDPAWEKQQRKTFTAWCN). Calponin-homology (CH) domains follow at residues 50 to 154 (KQQR…LRFA) and 163 to 269 (TSAK…HAFS). Residues 84–88 (LMLLL) carry the LXXLL motif motif. The interaction with VCL stretch occupies residues 108–126 (KINNVNKALDFIASKGVKL). The residue at position 114 (K114) is an N6-acetyllysine. Positions 177-192 (TAPYKNVNVQNFHISW) are polyphosphoinositide (PIP2)-binding. N6-acetyllysine is present on K214. T249 bears the Phosphothreonine mark. 4 Spectrin repeats span residues 293-403 (HLME…WLLN), 413-518 (HLAE…ALEK), 528-639 (QLHL…ALLE), and 649-752 (HLRR…EVEN). 2 positions are modified to N6-acetyllysine: K592 and K625. Position 696 is a phosphoserine (S696). The segment at 736 to 911 (WEQLLTTIAR…STALYGESDL (176 aa)) is mediates interaction with MICALL2. EF-hand domains are found at residues 765 to 800 (EQMQEFRASFNHFDKDHGGALGPEEFKACLISLGYD) and 806 to 841 (QGEAEFNRIMSLVDPNHSGLVTFQAFIDFMSRETTD). D778 is a Ca(2+) binding site. K779 bears the N6-acetyllysine mark. Residues D780 and E789 each coordinate Ca(2+). N6-acetyllysine is present on K859. S909 carries the phosphoserine modification.

It belongs to the alpha-actinin family. Homodimer; antiparallel. Binds TRIM3 at the N-terminus. Interacts with MICALL2 (preferentially in opened conformation); stimulated by RAB13 activation. Identified in a complex with CASK, IQGAP1, MAGI2, NPHS1, SPTAN1 and SPTBN1. Identified in a IGF2BP1-dependent mRNP granule complex containing untranslated mRNAs. Component of the CART complex, at least composed of ACTN4, HGS/HRS, MYO5B and TRIM3. Interacts with MAGI1. Interacts with PDLIM2. Interacts with PPARG and RARA. Binds to VCL; this interaction triggers VCL conformational changes. Interacts with SEPTIN14. Interacts with IGSF8. As to expression, widely expressed.

Its subcellular location is the nucleus. It is found in the cytoplasm. It localises to the cell junction. The protein localises to the cytoskeleton. The protein resides in the stress fiber. Its subcellular location is the perinuclear region. F-actin cross-linking protein which is thought to anchor actin to a variety of intracellular structures. This is a bundling protein. Probably involved in vesicular trafficking via its association with the CART complex. The CART complex is necessary for efficient transferrin receptor recycling but not for EGFR degradation. Involved in tight junction assembly in epithelial cells probably through interaction with MICALL2. Links MICALL2 to the actin cytoskeleton and recruits it to the tight junctions. May also function as a transcriptional coactivator, stimulating transcription mediated by the nuclear hormone receptors PPARG and RARA. Association with IGSF8 regulates the immune synapse formation and is required for efficient T-cell activation. The chain is Alpha-actinin-4 from Homo sapiens (Human).